The chain runs to 303 residues: Probable 5-dehydro-4-deoxyglucarate dehydratase (303 aa).

It belongs to the DapA family.

It carries out the reaction 5-dehydro-4-deoxy-D-glucarate + H(+) = 2,5-dioxopentanoate + CO2 + H2O. Its pathway is carbohydrate acid metabolism; D-glucarate degradation; 2,5-dioxopentanoate from D-glucarate: step 2/2. The polypeptide is Probable 5-dehydro-4-deoxyglucarate dehydratase (Acinetobacter baumannii (strain SDF)).